Here is a 187-residue protein sequence, read N- to C-terminus: NADH-quinone oxidoreductase subunit B (187 aa).

Cys66, Cys67, Cys131, and Cys161 together coordinate [4Fe-4S] cluster.

It belongs to the complex I 20 kDa subunit family. In terms of assembly, NDH-1 is composed of 14 different subunits. Subunits NuoB, C, D, E, F, and G constitute the peripheral sector of the complex. The cofactor is [4Fe-4S] cluster.

Its subcellular location is the cell inner membrane. The catalysed reaction is a quinone + NADH + 5 H(+)(in) = a quinol + NAD(+) + 4 H(+)(out). In terms of biological role, NDH-1 shuttles electrons from NADH, via FMN and iron-sulfur (Fe-S) centers, to quinones in the respiratory chain. Couples the redox reaction to proton translocation (for every two electrons transferred, four hydrogen ions are translocated across the cytoplasmic membrane), and thus conserves the redox energy in a proton gradient. The protein is NADH-quinone oxidoreductase subunit B of Rhizorhabdus wittichii (strain DSM 6014 / CCUG 31198 / JCM 15750 / NBRC 105917 / EY 4224 / RW1) (Sphingomonas wittichii).